Reading from the N-terminus, the 695-residue chain is MSGGEVVCSGWLRKSPPEKKLKRYAWKRRWFVLRSGRLTGDPDVLEYYKNDHAKKPIRIIDLNLCQQVDAGLTFNKKEFENSYIFDINTIDRIFYLVADSEEDMNKWVRCICDICGFNPTEEDPVKPLTGSSQAPVDSPFAISTAPASSQMEASSVALPPPYQVISLPPHPDTLGLQDDPQDYLLLINCQSKKPEPNRTLFDSAKPTFSETDCNDNVPSHQTPASSQSKHGMNGFFQQQMMYDCPPSRLTSVSGESSLYNLPRSYSHDVLPKESPSSTEADGELYTFNTPSGTAGVETQMRHVSISYDIPPTPGNTYQIPRTFPESTLGQSSKLDTIPDIPPPRPPKPHPTHDRSPVETCGVPRTASDTDSSYCIPPPAGMTPSRSNTISTVDLNKLRKDASSQDCYDIPRTFPSDRSSSLEGFHSQYKIKSVLTAGGVSGEELDENYVPMNPNSPPRQHSGSFTEPIQEPNYVPMTPGTFDFSSFGMQVPPPAHMGFRSSPKTPPRRPVPVADCEPPPVDRNLKPDRKVKPAPLDIKPLSEWEELQAPVRSPITRSFARDSSRFPMSPRPDSVHSTTSSSDSHDSEENYVPMNPNLSGEDPNLFASNSLDGGSSPMNKPKGDKQVEYLDLDLDSGKSTPPRKQKSSGSGSSMADERVDYVVVDQQKTLALKSTREAWTDGRQSTESETPTKNVK.

Serine 2 bears the N-acetylserine mark. One can recognise a PH domain in the interval 5–116; that stretch reads EVVCSGWLRK…WVRCICDICG (112 aa). The disordered stretch occupies residues 204–229; sequence AKPTFSETDCNDNVPSHQTPASSQSK. The segment covering 206–229 has biased composition (polar residues); sequence PTFSETDCNDNVPSHQTPASSQSK. A phosphoserine mark is found at serine 251, serine 253, serine 266, and serine 304. A disordered region spans residues 306 to 387; it reads SYDIPPTPGN…PAGMTPSRSN (82 aa). Over residues 314–334 the composition is skewed to polar residues; that stretch reads GNTYQIPRTFPESTLGQSSKL. Phosphothreonine is present on threonine 388. Phosphoserine occurs at positions 403 and 455. The interval 453-659 is disordered; that stretch reads PNSPPRQHSG…GSSMADERVD (207 aa). Polar residues-rich tracts occupy residues 457-466 and 605-617; these read PRQHSGSFTE and FASN…SSPM. Tyrosine 628 carries the post-translational modification Phosphotyrosine. At threonine 639 the chain carries Phosphothreonine. The residue at position 652 (serine 652) is a Phosphoserine. Residue tyrosine 660 is modified to Phosphotyrosine. Residues 671–695 form a disordered region; sequence LKSTREAWTDGRQSTESETPTKNVK. Positions 673 to 685 are enriched in basic and acidic residues; the sequence is STREAWTDGRQST. The residue at position 684 (serine 684) is a Phosphoserine. Over residues 686–695 the composition is skewed to polar residues; that stretch reads ESETPTKNVK.

Belongs to the GAB family. In terms of assembly, identified in a complex containing FRS2, GRB2, GAB1, PIK3R1 and SOS1. Forms a tripartite complex containing GAB1, METTL13 and SPRY2. Within the complex interacts with METTL13. Interacts with GRB2 and with other SH2-containing proteins. Interacts with phosphorylated LAT2. Interacts with PTPRJ. Interacts (phosphorylated) with PTPN11. Interacts with HCK. Phosphorylated on tyrosine residue(s) by the epidermal growth factor receptor (EGFR) and the insulin receptor (INSR). Tyrosine phosphorylation of GAB1 mediates interaction with several proteins that contain SH2 domains. Phosphorylated on tyrosine residues by HCK upon IL6 signaling. Phosphorylated in response to FGFR1 activation. In terms of tissue distribution, expressed in the inner ear (at protein level). Expression is detected in the cochlear duct, spiral limbus region, efferent and afferent nerves, and in spiral ganglion neurons (at protein level).

Its function is as follows. Adapter protein that plays a role in intracellular signaling cascades triggered by activated receptor-type kinases. Plays a role in FGFR1 signaling. Probably involved in signaling by the epidermal growth factor receptor (EGFR) and the insulin receptor (INSR). Involved in the MET/HGF-signaling pathway. In Mus musculus (Mouse), this protein is GRB2-associated-binding protein 1 (Gab1).